Reading from the N-terminus, the 500-residue chain is Coiled-coil domain-containing protein 125 (500 aa).

The tract at residues 1–105 (MSKVPRSSSE…TDSNSELSDE (105 aa)) is disordered. The span at 10–23 (EAEDIWETEDDMTE) shows a compositional bias: acidic residues. Polar residues predominate over residues 92–101 (RLSSTDSNSE). Coiled coils occupy residues 101–237 (ELSD…LEAL) and 286–314 (STRK…TADA). The residue at position 492 (serine 492) is a Phosphoserine.

Expressed in many tissues, with highest levels in spleen, thymus and bone marrow.

It is found in the cytoplasm. In terms of biological role, may be involved in the regulation of cell migration. This is Coiled-coil domain-containing protein 125 (Ccdc125) from Mus musculus (Mouse).